The primary structure comprises 193 residues: Putative manganese efflux pump MntP (193 aa).

6 helical membrane passes run 3–23, 41–61, 65–85, 106–126, 133–153, and 169–189; these read MYATLILALALSMDAFAASIC, LIFGLAEACTPLIGWSLGLYA, IIEWDHWVAFTLLFILGCRMI, IVLITTAIATSLDAMAIGIGL, IVHTAMAIGMMTMIMATLGML, and IGGLILIAIGFNILFEHLELF.

Belongs to the MntP (TC 9.B.29) family.

The protein resides in the cell inner membrane. Its function is as follows. Probably functions as a manganese efflux pump. This is Putative manganese efflux pump MntP from Photorhabdus laumondii subsp. laumondii (strain DSM 15139 / CIP 105565 / TT01) (Photorhabdus luminescens subsp. laumondii).